Reading from the N-terminus, the 305-residue chain is Homoserine O-acetyltransferase (305 aa).

The active-site Acyl-thioester intermediate is the Cys-142. Substrate is bound by residues Lys-163 and Ser-192. The active-site Proton acceptor is the His-233. The active site involves Glu-235. Arg-247 serves as a coordination point for substrate.

The protein belongs to the MetA family.

The protein resides in the cytoplasm. It catalyses the reaction L-homoserine + acetyl-CoA = O-acetyl-L-homoserine + CoA. It functions in the pathway amino-acid biosynthesis; L-methionine biosynthesis via de novo pathway; O-acetyl-L-homoserine from L-homoserine: step 1/1. Transfers an acetyl group from acetyl-CoA to L-homoserine, forming acetyl-L-homoserine. The polypeptide is Homoserine O-acetyltransferase (Methanomassiliicoccus intestinalis (strain Issoire-Mx1)).